The chain runs to 215 residues: CASP-like protein 1E1 (215 aa).

The Cytoplasmic segment spans residues 1 to 51; that stretch reads MESSRGKPGLNGSGGGAAAFDYSSRRGYYTGAGAALPPLAAGSRAPPVDPC. The helical transmembrane segment at 52 to 72 threads the bilayer; it reads CVALRVFVLLGTLASAVVMAA. Residues 73–103 are Extracellular-facing; sequence DRQSTTVQIAAGEQLAPPLRVPVTAKWTYSS. Residues 104-124 form a helical membrane-spanning segment; the sequence is AFVYFVVANAMVFAFSAAALA. The Cytoplasmic segment spans residues 125-130; it reads AVRRRS. Residues 131–151 traverse the membrane as a helical segment; that stretch reads AVVPVMVGDLVAMALLFSAVG. At 152–185 the chain is on the extracellular side; sequence AAAQFGLLGERGNAHVRWAKVCDVYGPFCERAMA. A helical membrane pass occupies residues 186–206; that stretch reads AVVVALIAAFADLVLLMLTIL. Topologically, residues 207 to 215 are cytoplasmic; that stretch reads TIHKASSYY.

Belongs to the Casparian strip membrane proteins (CASP) family. As to quaternary structure, homodimer and heterodimers.

Its subcellular location is the cell membrane. In Oryza sativa subsp. indica (Rice), this protein is CASP-like protein 1E1.